The sequence spans 358 residues: Pre-mRNA-splicing factor spp2 (358 aa).

2 disordered regions span residues 1 to 250 and 298 to 358; these read MTDQ…RAVP and AWNQ…RGDR. Residues 24–40 show a composition bias toward basic residues; sequence KTKKPSRPTHTRRHHAR. 2 stretches are compositionally biased toward basic and acidic residues: residues 80–137 and 145–160; these read LENR…DASR and RSRD…KDLQ. Positions 174 to 185 are enriched in polar residues; that stretch reads NPKSTTTATSSF. Composition is skewed to basic and acidic residues over residues 233–246 and 309–358; these read SSHD…HSDY and GDSR…RGDR.

This sequence belongs to the SPP2 family. In terms of assembly, associated with the spliceosome.

The protein resides in the nucleus. Involved in spliceosome maturation and the first step of pre-mRNA splicing. The protein is Pre-mRNA-splicing factor spp2 (msp-40) of Neurospora crassa (strain ATCC 24698 / 74-OR23-1A / CBS 708.71 / DSM 1257 / FGSC 987).